The sequence spans 244 residues: 7-cyano-7-deazaguanine synthase (244 aa).

14–24 (FSGGQDSATCV) is an ATP binding site. Cys-202, Cys-217, Cys-220, and Cys-223 together coordinate Zn(2+).

It belongs to the QueC family. It depends on Zn(2+) as a cofactor.

The catalysed reaction is 7-carboxy-7-deazaguanine + NH4(+) + ATP = 7-cyano-7-deazaguanine + ADP + phosphate + H2O + H(+). It participates in purine metabolism; 7-cyano-7-deazaguanine biosynthesis. In terms of biological role, catalyzes the ATP-dependent conversion of 7-carboxy-7-deazaguanine (CDG) to 7-cyano-7-deazaguanine (preQ(0)). This Burkholderia cenocepacia (strain ATCC BAA-245 / DSM 16553 / LMG 16656 / NCTC 13227 / J2315 / CF5610) (Burkholderia cepacia (strain J2315)) protein is 7-cyano-7-deazaguanine synthase.